A 181-amino-acid polypeptide reads, in one-letter code: Acireductone dioxygenase (181 aa).

Fe(2+) contacts are provided by His-91, His-93, Glu-97, and His-136. Residues His-91, His-93, Glu-97, and His-136 each contribute to the Ni(2+) site.

It belongs to the acireductone dioxygenase (ARD) family. In terms of assembly, monomer. Interacts with MMP14. It depends on Fe(2+) as a cofactor. Requires Ni(2+) as cofactor.

It is found in the cytoplasm. Its subcellular location is the nucleus. The protein localises to the cell membrane. It catalyses the reaction 1,2-dihydroxy-5-(methylsulfanyl)pent-1-en-3-one + O2 = 4-methylsulfanyl-2-oxobutanoate + formate + 2 H(+). The catalysed reaction is 1,2-dihydroxy-5-(methylsulfanyl)pent-1-en-3-one + O2 = 3-(methylsulfanyl)propanoate + CO + formate + 2 H(+). It participates in amino-acid biosynthesis; L-methionine biosynthesis via salvage pathway; L-methionine from S-methyl-5-thio-alpha-D-ribose 1-phosphate: step 5/6. Functionally, catalyzes 2 different reactions between oxygen and the acireductone 1,2-dihydroxy-3-keto-5-methylthiopentene (DHK-MTPene) depending upon the metal bound in the active site. Fe-containing acireductone dioxygenase (Fe-ARD) produces formate and 2-keto-4-methylthiobutyrate (KMTB), the alpha-ketoacid precursor of methionine in the methionine recycle pathway. Ni-containing acireductone dioxygenase (Ni-ARD) produces methylthiopropionate, carbon monoxide and formate, and does not lie on the methionine recycle pathway. The sequence is that of Acireductone dioxygenase (adi1) from Danio rerio (Zebrafish).